We begin with the raw amino-acid sequence, 346 residues long: MASVGIIGATGYVGTEIVRLLQNHPDINITSVVSHNFAGQKISDIYPNLKNVFEMECDELDIDKIADKAEVFVTALPHGISKEVIPKLVEKGKRIVDHSGDFRYKSVEVYEKWYNATHGMPHLLKLSAYGLPELHREEIKNAQIIGNPGCYPTCSILALAPLVKNRLVDTKNIIIDAASGVSGAGRKTDLPYQFCECDENFKAYSVSNHRHTSEIEQELSLLAEEEITVSFTPHLVPMKRGMLATIYANLNCEKSTSELIELYKEYYKNEYFVRILDEGKLPETKFVAGSNFIDIGLVVDKRLNRVVILSAIDNLGKGAAGQAVQVLNILFGLPEHRGLTNPGFYL.

Residue C150 is part of the active site.

This sequence belongs to the NAGSA dehydrogenase family. Type 1 subfamily.

It is found in the cytoplasm. It carries out the reaction N-acetyl-L-glutamate 5-semialdehyde + phosphate + NADP(+) = N-acetyl-L-glutamyl 5-phosphate + NADPH + H(+). It functions in the pathway amino-acid biosynthesis; L-arginine biosynthesis; N(2)-acetyl-L-ornithine from L-glutamate: step 3/4. In terms of biological role, catalyzes the NADPH-dependent reduction of N-acetyl-5-glutamyl phosphate to yield N-acetyl-L-glutamate 5-semialdehyde. This is N-acetyl-gamma-glutamyl-phosphate reductase from Acetivibrio thermocellus (strain ATCC 27405 / DSM 1237 / JCM 9322 / NBRC 103400 / NCIMB 10682 / NRRL B-4536 / VPI 7372) (Clostridium thermocellum).